The sequence spans 36 residues: Thrombin-like enzyme TLP (36 aa).

In terms of domain architecture, Peptidase S1 spans 1–36 (IGGFECNEHEHRSLVYLYNSAGFFCAGTLLNHEWVV).

Belongs to the peptidase S1 family. Snake venom subfamily. As to quaternary structure, monomer. As to expression, expressed by the venom gland.

It is found in the secreted. Functionally, thrombin-like snake venom serine protease. Shows strong hydrolytic activity towards Boc-Asp(oBzl)-Pro-Arg-MCA, a synthetic substrate for thrombin. This is Thrombin-like enzyme TLP from Naja naja (Indian cobra).